An 89-amino-acid chain; its full sequence is Small ribosomal subunit protein uS15 (89 aa).

Belongs to the universal ribosomal protein uS15 family. In terms of assembly, part of the 30S ribosomal subunit. Forms a bridge to the 50S subunit in the 70S ribosome, contacting the 23S rRNA.

One of the primary rRNA binding proteins, it binds directly to 16S rRNA where it helps nucleate assembly of the platform of the 30S subunit by binding and bridging several RNA helices of the 16S rRNA. In terms of biological role, forms an intersubunit bridge (bridge B4) with the 23S rRNA of the 50S subunit in the ribosome. This is Small ribosomal subunit protein uS15 from Mycolicibacterium vanbaalenii (strain DSM 7251 / JCM 13017 / BCRC 16820 / KCTC 9966 / NRRL B-24157 / PYR-1) (Mycobacterium vanbaalenii).